A 173-amino-acid polypeptide reads, in one-letter code: Chromophore lyase CpcS/CpeS 3 (173 aa).

The protein belongs to the CpcS/CpeS biliprotein lyase family.

In terms of biological role, covalently attaches a chromophore to Cys residue(s) of phycobiliproteins. The polypeptide is Chromophore lyase CpcS/CpeS 3 (Trichodesmium erythraeum (strain IMS101)).